The primary structure comprises 299 residues: Pyridoxal 5'-phosphate synthase subunit PdxS (299 aa).

D24 is a D-ribose 5-phosphate binding site. The Schiff-base intermediate with D-ribose 5-phosphate role is filled by K81. Position 153 (G153) interacts with D-ribose 5-phosphate. R165 contributes to the D-glyceraldehyde 3-phosphate binding site. Residues G219 and 240–241 (GS) each bind D-ribose 5-phosphate.

The protein belongs to the PdxS/SNZ family. As to quaternary structure, in the presence of PdxT, forms a dodecamer of heterodimers.

It catalyses the reaction aldehydo-D-ribose 5-phosphate + D-glyceraldehyde 3-phosphate + L-glutamine = pyridoxal 5'-phosphate + L-glutamate + phosphate + 3 H2O + H(+). Its pathway is cofactor biosynthesis; pyridoxal 5'-phosphate biosynthesis. In terms of biological role, catalyzes the formation of pyridoxal 5'-phosphate from ribose 5-phosphate (RBP), glyceraldehyde 3-phosphate (G3P) and ammonia. The ammonia is provided by the PdxT subunit. Can also use ribulose 5-phosphate and dihydroxyacetone phosphate as substrates, resulting from enzyme-catalyzed isomerization of RBP and G3P, respectively. The chain is Pyridoxal 5'-phosphate synthase subunit PdxS from Methanococcus maripaludis (strain C5 / ATCC BAA-1333).